A 98-amino-acid chain; its full sequence is Small ribosomal subunit protein uS19 (98 aa).

Belongs to the universal ribosomal protein uS19 family.

Its function is as follows. Protein S19 forms a complex with S13 that binds strongly to the 16S ribosomal RNA. The polypeptide is Small ribosomal subunit protein uS19 (Chlorobaculum parvum (strain DSM 263 / NCIMB 8327) (Chlorobium vibrioforme subsp. thiosulfatophilum)).